Here is a 326-residue protein sequence, read N- to C-terminus: Zona pellucida-binding protein 2 (326 aa).

The first 20 residues, 1–20, serve as a signal peptide directing secretion; sequence MLAWALLSAVLWSLAGVGSA. 3 N-linked (GlcNAc...) asparagine glycosylation sites follow: N86, N220, and N256.

This sequence belongs to the zona pellucida-binding protein Sp38 family. In terms of processing, N-glycosylated.

The protein resides in the secreted. The protein localises to the cytoplasmic vesicle. It localises to the secretory vesicle. It is found in the acrosome. Is implicated in sperm-oocyte interaction during fertilization. In Rattus norvegicus (Rat), this protein is Zona pellucida-binding protein 2 (Zpbp2).